Consider the following 212-residue polypeptide: 3-isopropylmalate dehydratase small subunit (212 aa).

Belongs to the LeuD family. LeuD type 1 subfamily. Heterodimer of LeuC and LeuD.

The enzyme catalyses (2R,3S)-3-isopropylmalate = (2S)-2-isopropylmalate. It functions in the pathway amino-acid biosynthesis; L-leucine biosynthesis; L-leucine from 3-methyl-2-oxobutanoate: step 2/4. Catalyzes the isomerization between 2-isopropylmalate and 3-isopropylmalate, via the formation of 2-isopropylmaleate. The sequence is that of 3-isopropylmalate dehydratase small subunit from Beutenbergia cavernae (strain ATCC BAA-8 / DSM 12333 / CCUG 43141 / JCM 11478 / NBRC 16432 / NCIMB 13614 / HKI 0122).